The following is a 194-amino-acid chain: Fe/S biogenesis protein NfuA (194 aa).

Positions 151 and 154 each coordinate [4Fe-4S] cluster.

Belongs to the NfuA family. As to quaternary structure, homodimer. [4Fe-4S] cluster is required as a cofactor.

In terms of biological role, involved in iron-sulfur cluster biogenesis. Binds a 4Fe-4S cluster, can transfer this cluster to apoproteins, and thereby intervenes in the maturation of Fe/S proteins. Could also act as a scaffold/chaperone for damaged Fe/S proteins. In Photobacterium profundum (strain SS9), this protein is Fe/S biogenesis protein NfuA.